The following is a 298-amino-acid chain: Estradiol 17-beta-dehydrogenase 11 (298 aa).

Positions methionine 1 to serine 21 are cleaved as a signal peptide. Leucine 40–valine 64 contacts NADP(+). Serine 172 contributes to the substrate binding site. Tyrosine 185 acts as the Proton acceptor in catalysis.

It belongs to the short-chain dehydrogenases/reductases (SDR) family. 17-beta-HSD 3 subfamily. In terms of tissue distribution, expressed in the liver (at protein level). Also expressed in the intestine and, at much lower levels, in the kidney.

It localises to the endoplasmic reticulum. The protein localises to the lipid droplet. The enzyme catalyses 17beta-estradiol + NAD(+) = estrone + NADH + H(+). It carries out the reaction 17beta-estradiol + NADP(+) = estrone + NADPH + H(+). In terms of biological role, can convert androstan-3-alpha,17-beta-diol (3-alpha-diol) to androsterone in vitro, suggesting that it may participate in androgen metabolism during steroidogenesis. May act by metabolizing compounds that stimulate steroid synthesis and/or by generating metabolites that inhibit it. Has no activity toward DHEA (dehydroepiandrosterone), or A-dione (4-androste-3,17-dione), and only a slight activity toward testosterone to A-dione. The sequence is that of Estradiol 17-beta-dehydrogenase 11 (Hsd17b11) from Mus musculus (Mouse).